The following is a 508-amino-acid chain: CUGBP Elav-like family member 2 (508 aa).

Necessary for RNA-binding, TNNT2 exon 5 and NMDA R1 exon 21 inclusion stretches follow at residues 1 to 283 (MRCP…LQNL) and 357 to 508 (LAGM…SKPY). 3 RRM domains span residues 40-123 (IKMF…PADS), 132-212 (RKLF…FADT), and 423-501 (ANLF…LKRS).

It belongs to the CELF/BRUNOL family. As to quaternary structure, interacts with A1CF. Expressed in tongue, spleen and brain (at protein level). Expressed in liver, thigh, stomach, lung and heart to very low levels (at protein level). Expressed in heart, brain, lung and muscle.

It is found in the nucleus. The protein localises to the cytoplasm. RNA-binding protein implicated in the regulation of several post-transcriptional events. Involved in pre-mRNA alternative splicing, mRNA translation and stability. Mediates exon inclusion and/or exclusion in pre-mRNA that are subject to tissue-specific and developmentally regulated alternative splicing. Specifically activates exon 5 inclusion of TNNT2 in embryonic, but not adult, skeletal muscle. Activates TNNT2 exon 5 inclusion by antagonizing the repressive effect of PTB. Acts both as an activator and as a repressor of a pair of coregulated exons: promotes inclusion of the smooth muscle (SM) exon but exclusion of the non-muscle (NM) exon in actinin pre-mRNAs. Promotes inclusion of exonS 21 and exclusion of exon 5 of the NMDA receptor R1 pre-mRNA. Involved in the apoB RNA editing activity. Increases COX2 mRNA stability and inhibits COX2 mRNA translation in epithelial cells after radiation injury. Modulates the cellular apoptosis program by regulating COX2-mediated prostaglandin E2 (PGE2) expression. Binds to (CUG)n triplet repeats in the 3'-UTR of transcripts such as DMPK. Binds to the muscle-specific splicing enhancer (MSE) intronic sites flanking the TNNT2 alternative exon 5. Binds preferentially to UG-rich sequences, in particular UG repeat and UGUU motifs. Binds to apoB mRNA, specifically to AU-rich sequences located immediately upstream of the edited cytidine. Binds AU-rich sequences in the 3'-UTR of COX2 mRNA. Binds to an intronic RNA element responsible for the silencing of exon 21 splicing. Binds to (CUG)n repeats. May be a specific regulator of miRNA biogenesis. Binds to primary microRNA pri-MIR140 and, with CELF1, negatively regulates the processing to mature miRNA. The protein is CUGBP Elav-like family member 2 (Celf2) of Mus musculus (Mouse).